Reading from the N-terminus, the 182-residue chain is MNVIFLPQGDWLGLSFRLLLAMLVGAVIGLNRQRGGRPAGMRTFTLVAMGSALFVMVPIQAEGDSSFAAINALSRTVQGVAAGVGFLGAGLILQRAPKTKRSGRPRVSGLTTAATIWITAALGAVIGCGLWQLGLIGTFFTLLTLSGFKRLQRIAWLRQSWERLIAWEAKTLPPDAEEEDDD.

4 helical membrane-spanning segments follow: residues 11-31, 43-63, 73-93, and 116-136; these read WLGL…IGLN, TFTL…QAEG, LSRT…GLIL, and IWIT…LGLI.

The protein belongs to the MgtC/SapB family.

Its subcellular location is the cell membrane. This chain is Protein SrpB (srpB), found in Synechococcus elongatus (strain ATCC 33912 / PCC 7942 / FACHB-805) (Anacystis nidulans R2).